A 436-amino-acid chain; its full sequence is Envelope glycoprotein (436 aa).

A signal peptide is located at residue methionine 1. At 2–436 (ANPSPHQIYN…GGLTVGGIAA (435 aa)) the chain is on the extracellular side. Asparagine 11 and asparagine 26 each carry an N-linked (GlcNAc...) asparagine; by host glycan. Cystine bridges form between cysteine 95-cysteine 117 and cysteine 109-cysteine 122. The segment at 203–255 (PPQAMGPNLVLPDQKPPSRQSQTGSKVATQRPQTNESAPRSVGPTTMGPKRIG) is disordered. A compositionally biased stretch (polar residues) spans 219–240 (PSRQSQTGSKVATQRPQTNESA). 3 N-linked (GlcNAc...) asparagine; by host glycosylation sites follow: asparagine 237, asparagine 272, and asparagine 277. The CXXC motif lies at 282–285 (CWLC). N-linked (GlcNAc...) asparagine; by host glycans are attached at residues asparagine 304, asparagine 344, asparagine 360, and asparagine 380.

In terms of assembly, the mature envelope protein (Env) consists of a trimer of SU-TM heterodimers attached by a labile interchain disulfide bond. In terms of processing, specific enzymatic cleavages in vivo yield mature proteins. Envelope glycoproteins are synthesized as an inactive precursor that is N-glycosylated and processed likely by host cell furin or by a furin-like protease in the Golgi to yield the mature SU and TM proteins. The cleavage site between SU and TM requires the minimal sequence [KR]-X-[KR]-R.

Its subcellular location is the virion membrane. It is found in the host cell membrane. Functionally, the surface protein (SU) attaches the virus to the host cell by binding to its receptor. This interaction triggers the refolding of the transmembrane protein (TM) and is thought to activate its fusogenic potential by unmasking its fusion peptide. Fusion occurs at the host cell plasma membrane. Its function is as follows. The transmembrane protein (TM) acts as a class I viral fusion protein. Under the current model, the protein has at least 3 conformational states: pre-fusion native state, pre-hairpin intermediate state, and post-fusion hairpin state. During viral and target cell membrane fusion, the coiled coil regions (heptad repeats) assume a trimer-of-hairpins structure, positioning the fusion peptide in close proximity to the C-terminal region of the ectodomain. The formation of this structure appears to drive apposition and subsequent fusion of viral and target cell membranes. Membranes fusion leads to delivery of the nucleocapsid into the cytoplasm. The sequence is that of Envelope glycoprotein from Feline leukemia virus (strain C/FS246).